A 445-amino-acid chain; its full sequence is UPF0210 protein SUB1511 (445 aa).

Belongs to the UPF0210 family. Homodimer.

The protein is UPF0210 protein SUB1511 of Streptococcus uberis (strain ATCC BAA-854 / 0140J).